A 364-amino-acid polypeptide reads, in one-letter code: Uroporphyrinogen decarboxylase (364 aa).

Residues 28 to 32, Asp-78, Tyr-160, Thr-215, and His-333 contribute to the substrate site; that span reads RQAGR.

This sequence belongs to the uroporphyrinogen decarboxylase family. As to quaternary structure, homodimer.

The protein localises to the cytoplasm. The enzyme catalyses uroporphyrinogen III + 4 H(+) = coproporphyrinogen III + 4 CO2. It functions in the pathway porphyrin-containing compound metabolism; protoporphyrin-IX biosynthesis; coproporphyrinogen-III from 5-aminolevulinate: step 4/4. Functionally, catalyzes the decarboxylation of four acetate groups of uroporphyrinogen-III to yield coproporphyrinogen-III. The protein is Uroporphyrinogen decarboxylase of Burkholderia pseudomallei (strain 668).